The chain runs to 143 residues: Transcriptional regulator MraZ (143 aa).

SpoVT-AbrB domains lie at Glu-5–Glu-47 and Ala-76–Ile-119.

It belongs to the MraZ family. In terms of assembly, forms oligomers.

The protein resides in the cytoplasm. It is found in the nucleoid. This chain is Transcriptional regulator MraZ, found in Bacillus subtilis (strain 168).